The chain runs to 213 residues: MKPYQRQFIEFALSKQVLKFGEFTLKSGRKSPYFFNAGLFNTGRDLALLGRFYAEALVDSGIEFDLLFGPAYKGIPIATTTAVALAEHHDLDLPYCFNRKEAKDHGEGGNLVGSALQGRVMLVDDVITAGTAIRESMEIIQANGATLAGVLISLDRQERGRGEISAIQEVERDYNCKVISIITLKDLIAYLEEKPEMAEHLAAVKAYREEFGV.

K26 is a binding site for 5-phospho-alpha-D-ribose 1-diphosphate. 34 to 35 (FF) serves as a coordination point for orotate. Residues 72–73 (YK), R99, K100, K103, H105, and 124–132 (DDVITAGTA) each bind 5-phospho-alpha-D-ribose 1-diphosphate. Residues T128 and R156 each coordinate orotate.

Belongs to the purine/pyrimidine phosphoribosyltransferase family. PyrE subfamily. Homodimer. Mg(2+) serves as cofactor.

The enzyme catalyses orotidine 5'-phosphate + diphosphate = orotate + 5-phospho-alpha-D-ribose 1-diphosphate. Its pathway is pyrimidine metabolism; UMP biosynthesis via de novo pathway; UMP from orotate: step 1/2. Catalyzes the transfer of a ribosyl phosphate group from 5-phosphoribose 1-diphosphate to orotate, leading to the formation of orotidine monophosphate (OMP). This is Orotate phosphoribosyltransferase from Escherichia coli O127:H6 (strain E2348/69 / EPEC).